Reading from the N-terminus, the 502-residue chain is Glycerol kinase (502 aa).

Position 14 (Thr-14) interacts with ADP. Residues Thr-14, Thr-15, and Ser-16 each coordinate ATP. Position 14 (Thr-14) interacts with sn-glycerol 3-phosphate. Arg-18 contacts ADP. Residues Arg-84, Glu-85, and Tyr-136 each coordinate sn-glycerol 3-phosphate. Glycerol contacts are provided by Arg-84, Glu-85, and Tyr-136. His-232 is modified (phosphohistidine; by HPr). Residue Asp-246 coordinates sn-glycerol 3-phosphate. Glycerol is bound by residues Asp-246 and Gln-247. Residues Thr-268 and Gly-311 each coordinate ADP. Thr-268, Gly-311, Gln-315, and Gly-412 together coordinate ATP. Gly-412 and Asn-416 together coordinate ADP.

Belongs to the FGGY kinase family. In terms of assembly, homotetramer and homodimer (in equilibrium). The phosphoenolpyruvate-dependent sugar phosphotransferase system (PTS), including enzyme I, and histidine-containing protein (HPr) are required for the phosphorylation, which leads to the activation of the enzyme.

It carries out the reaction glycerol + ATP = sn-glycerol 3-phosphate + ADP + H(+). It participates in polyol metabolism; glycerol degradation via glycerol kinase pathway; sn-glycerol 3-phosphate from glycerol: step 1/1. Its activity is regulated as follows. Activated by phosphorylation and inhibited by fructose 1,6-bisphosphate (FBP). Key enzyme in the regulation of glycerol uptake and metabolism. Catalyzes the phosphorylation of glycerol to yield sn-glycerol 3-phosphate. The protein is Glycerol kinase of Streptococcus pneumoniae serotype 2 (strain D39 / NCTC 7466).